Here is a 175-residue protein sequence, read N- to C-terminus: Lipoprotein signal peptidase (175 aa).

Helical transmembrane passes span 25–45, 56–76, 81–101, and 110–130; these read LWMAFALLVVVLDQFFKIVIV, VTGFFNLVLVYNKGAAFSFLA, WQRWFFTGLGIVVGAFIVWLL, and FCFAVSLILGGAVGNVIDRVV. Active-site residues include aspartate 136 and aspartate 154. Residues 146–166 form a helical membrane-spanning segment; sequence HWPAFNVADCAITVGAVLLIV.

This sequence belongs to the peptidase A8 family.

The protein localises to the cell inner membrane. It catalyses the reaction Release of signal peptides from bacterial membrane prolipoproteins. Hydrolyzes -Xaa-Yaa-Zaa-|-(S,diacylglyceryl)Cys-, in which Xaa is hydrophobic (preferably Leu), and Yaa (Ala or Ser) and Zaa (Gly or Ala) have small, neutral side chains.. It participates in protein modification; lipoprotein biosynthesis (signal peptide cleavage). Its function is as follows. This protein specifically catalyzes the removal of signal peptides from prolipoproteins. This is Lipoprotein signal peptidase from Cupriavidus necator (strain ATCC 17699 / DSM 428 / KCTC 22496 / NCIMB 10442 / H16 / Stanier 337) (Ralstonia eutropha).